We begin with the raw amino-acid sequence, 92 residues long: Nodulation protein F (92 aa).

The Carrier domain maps to 4–88 (QLTLEIISAI…DVVEAVRGLL (85 aa)). An O-(pantetheine 4'-phosphoryl)serine modification is found at Ser-45.

In terms of processing, 4'-phosphopantetheine is transferred from CoA to a specific serine of apo-NodF.

In terms of biological role, proposed to synthesize nod factor fatty acyl chain. Involved in trans-2,trans-4,trans-6,cis-11-octadecatetraenoic acid biosynthesis. This Rhizobium leguminosarum bv. viciae protein is Nodulation protein F (nodF).